The following is a 165-amino-acid chain: Crossover junction endodeoxyribonuclease RuvC (165 aa).

Residues D7, E68, and H142 contribute to the active site. Residues D7, E68, and H142 each coordinate Mg(2+).

The protein belongs to the RuvC family. As to quaternary structure, homodimer which binds Holliday junction (HJ) DNA. The HJ becomes 2-fold symmetrical on binding to RuvC with unstacked arms; it has a different conformation from HJ DNA in complex with RuvA. In the full resolvosome a probable DNA-RuvA(4)-RuvB(12)-RuvC(2) complex forms which resolves the HJ. Mg(2+) is required as a cofactor.

Its subcellular location is the cytoplasm. It carries out the reaction Endonucleolytic cleavage at a junction such as a reciprocal single-stranded crossover between two homologous DNA duplexes (Holliday junction).. In terms of biological role, the RuvA-RuvB-RuvC complex processes Holliday junction (HJ) DNA during genetic recombination and DNA repair. Endonuclease that resolves HJ intermediates. Cleaves cruciform DNA by making single-stranded nicks across the HJ at symmetrical positions within the homologous arms, yielding a 5'-phosphate and a 3'-hydroxyl group; requires a central core of homology in the junction. The consensus cleavage sequence is 5'-(A/T)TT(C/G)-3'. Cleavage occurs on the 3'-side of the TT dinucleotide at the point of strand exchange. HJ branch migration catalyzed by RuvA-RuvB allows RuvC to scan DNA until it finds its consensus sequence, where it cleaves and resolves the cruciform DNA. The polypeptide is Crossover junction endodeoxyribonuclease RuvC (Anaplasma marginale (strain Florida)).